The chain runs to 306 residues: Mating type protein SmtA-1 (306 aa).

The alpha box DNA-binding region spans 49–104 (APKKKVNGFMGFRSYYSPLFSQFPQKARSPFMTILWQHDPFHNEWDFMCSVYSSIR).

The protein belongs to the MATALPHA1 family.

It is found in the nucleus. In terms of biological role, mating type proteins are sequence specific DNA-binding proteins that act as master switches in fungal differentiation by controlling gene expression in a cell type-specific fashion. Transcriptional activator that induces the transcription of alpha-specific genes. The chain is Mating type protein SmtA-1 (SMTA1) from Sordaria macrospora (strain ATCC MYA-333 / DSM 997 / K(L3346) / K-hell).